Here is a 403-residue protein sequence, read N- to C-terminus: Odorant receptor 43b (403 aa).

At 1–49 the chain is on the cytoplasmic side; the sequence is MFGHFKLVYPAPISEPIQSRDSNAYMMETLRNSGLNLKNDFGIGRKIWR. A helical membrane pass occupies residues 50-70; sequence VFSFTYNMVILPVSFPINYVI. At 71–83 the chain is on the extracellular side; the sequence is HLAEFPPELLLQS. Residues 84-104 traverse the membrane as a helical segment; the sequence is LQLCLNTWCFALKFFTLIVYT. Residues 105–139 lie on the Cytoplasmic side of the membrane; the sequence is HRLELANKHFDELDKYCVKPAEKRKVRDMVATITR. Residues 140 to 160 traverse the membrane as a helical segment; that stretch reads LYLTFVVVYVLYATSTLLDGL. Topologically, residues 161 to 193 are extracellular; sequence LHHRVPYNTYYPFINWRVDRTQMYIQSFLEYFT. The chain crosses the membrane as a helical span at residues 194–214; the sequence is VGYAIYVATATDSYPVIYVAA. The Cytoplasmic portion of the chain corresponds to 215 to 271; that stretch reads LRTHILLLKDRIIYLGDPSNEGSSDPSYMFKSLVDCIKAHRTMLNFCDAIQPIISGT. A helical membrane pass occupies residues 272–292; that stretch reads IFAQFIICGSILGIIMINMVL. The Extracellular segment spans residues 293 to 299; that stretch reads FADQSTR. A helical membrane pass occupies residues 300–320; the sequence is FGIVIYVMAVLLQTFPLCFYC. Residues 321–372 lie on the Cytoplasmic side of the membrane; the sequence is NAIVDDCKELAHALFHSAWWVQDKRYQRTVIQFLQKLQQPMTFTAMNIFNIN. A helical membrane pass occupies residues 373–393; sequence LATNINVAKFAFTVYAIASGM. The Extracellular segment spans residues 394–403; the sequence is NLDQKLSIKE.

The protein belongs to the insect chemoreceptor superfamily. Heteromeric odorant receptor channel (TC 1.A.69) family. Or2a subfamily. In terms of assembly, interacts with Orco. Complexes exist early in the endomembrane system in olfactory sensory neurons (OSNs), coupling these complexes to the conserved ciliary trafficking pathway. Expressed in 16 olfactory receptor neurons in a broad area across the antenna, including both anterior and posterior faces and in the maxillary palp. This expression pattern matches the distribution of the small sensilla basiconica. Expression in the antenna is observed late in antennal development at 93 hours APF.

The protein localises to the cell membrane. Its function is as follows. Odorant receptor which mediates acceptance or avoidance behavior, depending on its substrates. The odorant receptor repertoire encodes a large collection of odor stimuli that vary widely in identity, intensity, and duration. May form a complex with Orco to form odorant-sensing units, providing sensitive and prolonged odorant signaling and calcium permeability. The protein is Odorant receptor 43b (Or43b) of Drosophila melanogaster (Fruit fly).